The chain runs to 132 residues: Arsenate reductase 1 (132 aa).

Catalysis depends on nucleophile residues Cys-10, Cys-82, and Cys-89. Disulfide bonds link Cys-10–Cys-82 and Cys-82–Cys-89.

Belongs to the low molecular weight phosphotyrosine protein phosphatase family. Thioredoxin-coupled ArsC subfamily.

It localises to the cytoplasm. The catalysed reaction is arsenate + [thioredoxin]-dithiol + H(+) = arsenite + [thioredoxin]-disulfide + H2O. Functionally, catalyzes the reduction of arsenate [As(V)] to arsenite [As(III)]. This is Arsenate reductase 1 from Staphylococcus epidermidis (strain ATCC 35984 / DSM 28319 / BCRC 17069 / CCUG 31568 / BM 3577 / RP62A).